Reading from the N-terminus, the 390-residue chain is Putative nickel insertion protein (390 aa).

Belongs to the LarC family.

The polypeptide is Putative nickel insertion protein (Geotalea uraniireducens (strain Rf4) (Geobacter uraniireducens)).